The primary structure comprises 389 residues: Chalcone synthase 9 (389 aa).

Residue C164 is part of the active site.

Belongs to the thiolase-like superfamily. Chalcone/stilbene synthases family.

It catalyses the reaction (E)-4-coumaroyl-CoA + 3 malonyl-CoA + 3 H(+) = 2',4,4',6'-tetrahydroxychalcone + 3 CO2 + 4 CoA. It participates in secondary metabolite biosynthesis; flavonoid biosynthesis. In terms of biological role, the primary product of this enzyme is 4,2',4',6'-tetrahydroxychalcone (also termed naringenin-chalcone or chalcone) which can under specific conditions spontaneously isomerize into naringenin. In Medicago sativa (Alfalfa), this protein is Chalcone synthase 9 (CHS9).